The primary structure comprises 130 residues: uncharacterized protein (130 aa).

This is an uncharacterized protein from Methanocaldococcus jannaschii (strain ATCC 43067 / DSM 2661 / JAL-1 / JCM 10045 / NBRC 100440) (Methanococcus jannaschii).